Reading from the N-terminus, the 312-residue chain is Olfactory receptor 1D2 (312 aa).

Over methionine 1 to arginine 25 the chain is Extracellular. Asparagine 5 carries an N-linked (GlcNAc...) asparagine glycan. Residues isoleucine 26–isoleucine 49 form a helical membrane-spanning segment. At serine 50–threonine 57 the chain is on the cytoplasmic side. A helical transmembrane segment spans residues proline 58 to proline 79. Residues lysine 80–glutamine 100 are Extracellular-facing. Cysteine 97 and cysteine 189 are disulfide-bonded. The helical transmembrane segment at leucine 101–tyrosine 120 threads the bilayer. At aspartate 121–lysine 139 the chain is on the cytoplasmic side. A helical transmembrane segment spans residues leucine 140–isoleucine 158. Topologically, residues histidine 159–histidine 196 are extracellular. Asparagine 195 is a glycosylation site (N-linked (GlcNAc...) asparagine). Residues threonine 197–valine 219 traverse the membrane as a helical segment. At leucine 220–lysine 236 the chain is on the cytoplasmic side. The helical transmembrane segment at alanine 237–tyrosine 259 threads the bilayer. At leucine 260–serine 271 the chain is on the extracellular side. A helical membrane pass occupies residues valine 272 to leucine 291. Topologically, residues arginine 292–threonine 312 are cytoplasmic.

It belongs to the G-protein coupled receptor 1 family. Expressed in testis. Expressed in spermatozoa (at protein level). Expressed in olfactory epithelium.

It is found in the cell membrane. In terms of biological role, odorant receptor which may be involved in sperm chemotaxis. Bourgeonal is a strong chemoattractant for sperm in vitro and is shown to be a strong agonist for OR1D2 in vitro. May also function in olfactory reception. This chain is Olfactory receptor 1D2 (OR1D2), found in Homo sapiens (Human).